We begin with the raw amino-acid sequence, 260 residues long: Vaa serine proteinase homolog 1 (260 aa).

The first 18 residues, 1–18 (MVLIRVLANLLVLQLSYA), serve as a signal peptide directing secretion. The propeptide occupies 19–24 (QKSSEL). The region spanning 25-251 (VIGGDECNIN…YTDWIQSIIA (227 aa)) is the Peptidase S1 domain. Intrachain disulfides connect Cys-31-Cys-165, Cys-52-Cys-68, Cys-100-Cys-258, Cys-144-Cys-212, Cys-176-Cys-191, and Cys-202-Cys-227. Asn-123 carries N-linked (GlcNAc...) asparagine glycosylation. Positions 172–186 (DYSVCQKVYRKLPEK) are key residues for binding to FVIIIa. Asn-253 carries N-linked (GlcNAc...) asparagine glycosylation.

The protein belongs to the peptidase S1 family. Snake venom subfamily. In terms of processing, N-glycosylated. The toxin exists in multiple glycoforms. As to expression, expressed by the venom gland.

Its subcellular location is the secreted. Functionally, this is the first member of the serine protease family that has strong anticoagulant activity and lacks enzymatic activity. It inhibits activities of three blood coagulation complexes: (1) prothrombinase complex (composed of blood coagulation factors Va and Xa (F5 and F10)) (IC(50)=164.1 nM), (2) intrinsic tenase complex (composed of factors VIIIa and IXa (F8 and F9)), and (3) extrinsic tenase complex (composed of tissue factor and factor VIIa (F7)). The toxin also has been observed to bind prothrombin, factor FVa, non-activated and activated forms of factors FVII (F7) (FVII and FVIIa), factor FVIIIa (F8), factors FIX and FIXa (F9) and factors FX and FXa (F10). The toxin inhibits the activity of the intrinsic tenase complex mainly by competing with FIXa (F9) for binding to FVIIIa (F8). This Vipera ammodytes ammodytes (Western sand viper) protein is Vaa serine proteinase homolog 1.